Here is a 226-residue protein sequence, read N- to C-terminus: PKHD-type hydroxylase Sde_2812 (226 aa).

The 101-residue stretch at 78–178 (KIFPPLFNCY…RLASFFWLQS (101 aa)) folds into the Fe2OG dioxygenase domain. The Fe cation site is built by His96, Asp98, and His159. Arg169 contributes to the 2-oxoglutarate binding site.

The cofactor is Fe(2+). Requires L-ascorbate as cofactor.

This is PKHD-type hydroxylase Sde_2812 from Saccharophagus degradans (strain 2-40 / ATCC 43961 / DSM 17024).